The following is a 538-amino-acid chain: Putative cysteine ligase BshC (538 aa).

The stretch at 460 to 484 (KINEQIELLERMLKRNVEKKHEVEL) forms a coiled coil.

Belongs to the BshC family.

Its function is as follows. Involved in bacillithiol (BSH) biosynthesis. May catalyze the last step of the pathway, the addition of cysteine to glucosamine malate (GlcN-Mal) to generate BSH. The sequence is that of Putative cysteine ligase BshC from Bacillus anthracis (strain A0248).